A 51-amino-acid polypeptide reads, in one-letter code: Large ribosomal subunit protein bL33 (51 aa).

Residues M1 to R24 are disordered.

This sequence belongs to the bacterial ribosomal protein bL33 family.

The polypeptide is Large ribosomal subunit protein bL33 (Cellvibrio japonicus (strain Ueda107) (Pseudomonas fluorescens subsp. cellulosa)).